The chain runs to 261 residues: Imidazole glycerol phosphate synthase subunit HisF (261 aa).

Catalysis depends on residues Asp11 and Asp130.

The protein belongs to the HisA/HisF family. In terms of assembly, heterodimer of HisH and HisF.

The protein localises to the cytoplasm. It carries out the reaction 5-[(5-phospho-1-deoxy-D-ribulos-1-ylimino)methylamino]-1-(5-phospho-beta-D-ribosyl)imidazole-4-carboxamide + L-glutamine = D-erythro-1-(imidazol-4-yl)glycerol 3-phosphate + 5-amino-1-(5-phospho-beta-D-ribosyl)imidazole-4-carboxamide + L-glutamate + H(+). It functions in the pathway amino-acid biosynthesis; L-histidine biosynthesis; L-histidine from 5-phospho-alpha-D-ribose 1-diphosphate: step 5/9. Functionally, IGPS catalyzes the conversion of PRFAR and glutamine to IGP, AICAR and glutamate. The HisF subunit catalyzes the cyclization activity that produces IGP and AICAR from PRFAR using the ammonia provided by the HisH subunit. The protein is Imidazole glycerol phosphate synthase subunit HisF of Jannaschia sp. (strain CCS1).